The chain runs to 1035 residues: Putative protein FAM47C (1035 aa).

2 disordered regions span residues 1–21 (MGDQRPQDRPSSPGMDSTPWY) and 159–797 (LEDA…RRVS). Residues 159-173 (LEDAGSCEGQEKTTD) are compositionally biased toward basic and acidic residues. The segment covering 380-392 (PEPPKTRVPPLRP) has biased composition (pro residues). Basic and acidic residues predominate over residues 478-490 (PPEKDVSHLRPEP). A compositionally biased stretch (polar residues) spans 533–544 (SLHQAPPESSVS). Composition is skewed to basic and acidic residues over residues 611–622 (PETRVSHLRPEP), 683–694 (PETRVSHLRPEP), and 753–766 (EPLETRVSHLRPEP).

It belongs to the FAM47 family.

This Homo sapiens (Human) protein is Putative protein FAM47C (FAM47C).